A 246-amino-acid polypeptide reads, in one-letter code: Acetoacetate decarboxylase (246 aa).

Lys116 functions as the Schiff-base intermediate with acetoacetate in the catalytic mechanism.

Belongs to the ADC family.

The enzyme catalyses acetoacetate + H(+) = acetone + CO2. In terms of biological role, catalyzes the conversion of acetoacetate to acetone and carbon dioxide. This is Acetoacetate decarboxylase from Burkholderia lata (strain ATCC 17760 / DSM 23089 / LMG 22485 / NCIMB 9086 / R18194 / 383).